Here is a 200-residue protein sequence, read N- to C-terminus: Diadenylate cyclase (200 aa).

A helical membrane pass occupies residues 5–25; the sequence is ILLFITLIFLLLLFVFLIAFA. The DAC domain occupies 28–185; sequence NKRVRNYVVR…KGVIKTLSSN (158 aa).

The protein belongs to the adenylate cyclase family. DacB/CdaS subfamily. Probably oligomerizes.

Its subcellular location is the cell membrane. It catalyses the reaction 2 ATP = 3',3'-c-di-AMP + 2 diphosphate. Catalyzes the condensation of 2 ATP molecules into cyclic di-AMP (c-di-AMP), a second messenger used to regulate differing processes in different bacteria. In Mycoplasma genitalium (strain ATCC 33530 / DSM 19775 / NCTC 10195 / G37) (Mycoplasmoides genitalium), this protein is Diadenylate cyclase.